A 218-amino-acid polypeptide reads, in one-letter code: Albicidin resistance protein (218 aa).

The protein localises to the periplasm. Its function is as follows. Albicidin resistance protein binds to form a complex without antibiotic activity but without catalyzing any further chemical modifications to albicidin. This chain is Albicidin resistance protein, found in Klebsiella oxytoca.